A 330-amino-acid chain; its full sequence is MNEQPKPTSERHVPVLRDRCINLLAPGFDAARQQGKAPIVIDATLGMGGHSEAMLQRFPDLHLIGIDRDEEALALAGERLAPFSARTDLVHAVYDEIPEVLADLGVTEISGILMDLGVSSLQLDERERGFAYSFDAPLDMRMDTSRGQTAADVVNTYNEEELVRIIRKWGEEKFAGRIANRIVAARGEKPFTTTGELVEQIRSVVPAGAAKSGGHPAKRTFQALRIEVNEELDVLERAVPAAVDALAMGGRIVVMSYHSLEDKIVKSVLQGRSKSSAPLGFPVELEEHKPELKILTKGTEVPTAVEIAENPRAASARLRAAERIRARRAA.

S-adenosyl-L-methionine is bound by residues 48–50 (GGH), Asp-67, Leu-101, Asp-115, and Gln-122.

Belongs to the methyltransferase superfamily. RsmH family.

Its subcellular location is the cytoplasm. The enzyme catalyses cytidine(1402) in 16S rRNA + S-adenosyl-L-methionine = N(4)-methylcytidine(1402) in 16S rRNA + S-adenosyl-L-homocysteine + H(+). Specifically methylates the N4 position of cytidine in position 1402 (C1402) of 16S rRNA. This Pseudarthrobacter chlorophenolicus (strain ATCC 700700 / DSM 12829 / CIP 107037 / JCM 12360 / KCTC 9906 / NCIMB 13794 / A6) (Arthrobacter chlorophenolicus) protein is Ribosomal RNA small subunit methyltransferase H.